Reading from the N-terminus, the 417-residue chain is Tryptophan synthase beta chain (417 aa).

Lys-99 is modified (N6-(pyridoxal phosphate)lysine).

This sequence belongs to the TrpB family. In terms of assembly, tetramer of two alpha and two beta chains. Pyridoxal 5'-phosphate is required as a cofactor.

It catalyses the reaction (1S,2R)-1-C-(indol-3-yl)glycerol 3-phosphate + L-serine = D-glyceraldehyde 3-phosphate + L-tryptophan + H2O. Its pathway is amino-acid biosynthesis; L-tryptophan biosynthesis; L-tryptophan from chorismate: step 5/5. In terms of biological role, the beta subunit is responsible for the synthesis of L-tryptophan from indole and L-serine. This chain is Tryptophan synthase beta chain (trpB), found in Corynebacterium glutamicum (strain ATCC 13032 / DSM 20300 / JCM 1318 / BCRC 11384 / CCUG 27702 / LMG 3730 / NBRC 12168 / NCIMB 10025 / NRRL B-2784 / 534).